The sequence spans 545 residues: Chaperonin GroEL (545 aa).

ATP is bound by residues 30–33, lysine 51, 87–91, glycine 415, 483–485, and aspartate 499; these read TLGP, DGTTT, and NAA.

It belongs to the chaperonin (HSP60) family. Forms a cylinder of 14 subunits composed of two heptameric rings stacked back-to-back. Interacts with the co-chaperonin GroES.

It localises to the cytoplasm. The catalysed reaction is ATP + H2O + a folded polypeptide = ADP + phosphate + an unfolded polypeptide.. Functionally, together with its co-chaperonin GroES, plays an essential role in assisting protein folding. The GroEL-GroES system forms a nano-cage that allows encapsulation of the non-native substrate proteins and provides a physical environment optimized to promote and accelerate protein folding. The sequence is that of Chaperonin GroEL from Aquifex aeolicus (strain VF5).